A 185-amino-acid chain; its full sequence is Bcl-2-like protein 10 (185 aa).

Residues 76–95 (LSNDQEFNWGRLVMLLAFVG) carry the BH1 motif. The BH2 signature appears at 138–149 (WLEAHGGWDGFC). The chain crosses the membrane as a helical span at residues 160–182 (FWRRLLIRAILSCFFATAIFYIW).

It belongs to the Bcl-2 family. In terms of assembly, interacts with BAX. Interacts with BCL2, BCL2L1/BCLX. Interacts with APAF1. Interacts with ITPR1, ITPR2 and ITPR3; the interaction with ITPR1 is increased in the presence of AHCLY1. Interacts with AHCYL1. Interacts with HIP1R (via ENTH and I/LWEQ domains). Interacts with CASP9. Interacts with BCL2L11/BIM. Interacts with BIK. Interacts with UBQLN4. Interacts with NME2/NM23-H2. Interacts with and PMAIP1/NOXA. Interacts with TPX2. Interacts with UBQLN1; in the cytoplasm. Interacts (via BH1 domain) with BECN1. Requires Ca(2+) as cofactor. Post-translationally, monoubiquitinated by UBQLN1; results in stabilization of BCL2L10 protein abundance and in relocalization from mitochondria to cytoplasm. As to expression, expressed in oligodendroglial lineage cells.

The protein resides in the mitochondrion. The protein localises to the nucleus membrane. Its subcellular location is the endoplasmic reticulum. It is found in the cytoplasm. It localises to the cytoskeleton. The protein resides in the spindle. In terms of biological role, promotes cell survival by suppressing apoptosis induced by BAX but not BAK. Increases binding of AHCYL1/IRBIT to ITPR1. Reduces ITPR1-mediated calcium release from the endoplasmic reticulum cooperatively with AHCYL1/IRBIT under normal cellular conditions. Under apoptotic stress conditions, dissociates from ITPR1 and is displaced from mitochondria-associated endoplasmic reticulum membranes, leading to increased Ca(2+) transfer to mitochondria which promotes apoptosis. Required for the correct formation of the microtubule organizing center during oocyte cell division, potentially via regulation of protein abundance and localization of other microtubule organizing center components such as AURKA and TPX2. In Rattus norvegicus (Rat), this protein is Bcl-2-like protein 10.